Here is a 355-residue protein sequence, read N- to C-terminus: Uroporphyrinogen decarboxylase (355 aa).

Substrate-binding positions include 27–31 (RQAGR), D78, Y155, S210, and H328.

It belongs to the uroporphyrinogen decarboxylase family. Homodimer.

It is found in the cytoplasm. It catalyses the reaction uroporphyrinogen III + 4 H(+) = coproporphyrinogen III + 4 CO2. It participates in porphyrin-containing compound metabolism; protoporphyrin-IX biosynthesis; coproporphyrinogen-III from 5-aminolevulinate: step 4/4. In terms of biological role, catalyzes the decarboxylation of four acetate groups of uroporphyrinogen-III to yield coproporphyrinogen-III. This chain is Uroporphyrinogen decarboxylase, found in Pseudomonas fluorescens (strain ATCC BAA-477 / NRRL B-23932 / Pf-5).